The chain runs to 608 residues: Kinetochore protein NUF2 (608 aa).

The tract at residues 121 to 125 (IGNLR) is required for nuclear localization and function. 2 coiled-coil regions span residues 176–319 (FESQ…QQKL) and 358–460 (REKL…IEEE).

Belongs to the NUF2 family.

The protein localises to the chromosome. It is found in the centromere. Its subcellular location is the kinetochore. Functionally, required for anchoring centrosomal cores to the nuclear periphery. Plays a role in chromosome segregation but is dispensable for centromere clustering. This chain is Kinetochore protein NUF2, found in Toxoplasma gondii (strain ATCC 50611 / Me49).